Here is a 173-residue protein sequence, read N- to C-terminus: Putative metal-dependent hydrolase BCG9842_B2589 (173 aa).

3 residues coordinate Zn(2+): H65, H156, and H160.

This sequence belongs to the metal hydrolase YfiT family. Homodimer. The cofactor is Zn(2+).

It localises to the cytoplasm. Possible metal-dependent hydrolase. The sequence is that of Putative metal-dependent hydrolase BCG9842_B2589 from Bacillus cereus (strain G9842).